Here is a 416-residue protein sequence, read N- to C-terminus: Serine hydroxymethyltransferase (416 aa).

(6S)-5,6,7,8-tetrahydrofolate contacts are provided by residues Leu121 and Gly125–Leu127. Residue Lys229 is modified to N6-(pyridoxal phosphate)lysine. Residues Glu245 and Ser354 to Phe356 contribute to the (6S)-5,6,7,8-tetrahydrofolate site.

This sequence belongs to the SHMT family. Homodimer. Pyridoxal 5'-phosphate is required as a cofactor.

It localises to the cytoplasm. It catalyses the reaction (6R)-5,10-methylene-5,6,7,8-tetrahydrofolate + glycine + H2O = (6S)-5,6,7,8-tetrahydrofolate + L-serine. The protein operates within one-carbon metabolism; tetrahydrofolate interconversion. It participates in amino-acid biosynthesis; glycine biosynthesis; glycine from L-serine: step 1/1. Functionally, catalyzes the reversible interconversion of serine and glycine with tetrahydrofolate (THF) serving as the one-carbon carrier. This reaction serves as the major source of one-carbon groups required for the biosynthesis of purines, thymidylate, methionine, and other important biomolecules. Also exhibits THF-independent aldolase activity toward beta-hydroxyamino acids, producing glycine and aldehydes, via a retro-aldol mechanism. This is Serine hydroxymethyltransferase from Aliivibrio fischeri (strain ATCC 700601 / ES114) (Vibrio fischeri).